The following is a 73-amino-acid chain: DNA gyrase inhibitor YacG (73 aa).

Zn(2+) contacts are provided by Cys14, Cys17, Cys30, and Cys34. Residues 54-73 form a disordered region; that stretch reads AEQADDTAGPGAAEDDTDSH.

The protein belongs to the DNA gyrase inhibitor YacG family. As to quaternary structure, interacts with GyrB. The cofactor is Zn(2+).

Inhibits all the catalytic activities of DNA gyrase by preventing its interaction with DNA. Acts by binding directly to the C-terminal domain of GyrB, which probably disrupts DNA binding by the gyrase. In Hyphomonas neptunium (strain ATCC 15444), this protein is DNA gyrase inhibitor YacG.